Reading from the N-terminus, the 692-residue chain is Elongation factor G (692 aa).

The tr-type G domain maps to 8–283 (NRIRNIGIAA…AVIDYLPAPT (276 aa)). Residues 17–24 (AHIDAGKT), 81–85 (DTPGH), and 135–138 (NKMD) contribute to the GTP site.

This sequence belongs to the TRAFAC class translation factor GTPase superfamily. Classic translation factor GTPase family. EF-G/EF-2 subfamily.

It is found in the cytoplasm. In terms of biological role, catalyzes the GTP-dependent ribosomal translocation step during translation elongation. During this step, the ribosome changes from the pre-translocational (PRE) to the post-translocational (POST) state as the newly formed A-site-bound peptidyl-tRNA and P-site-bound deacylated tRNA move to the P and E sites, respectively. Catalyzes the coordinated movement of the two tRNA molecules, the mRNA and conformational changes in the ribosome. This chain is Elongation factor G, found in Helicobacter pylori (strain Shi470).